Reading from the N-terminus, the 161-residue chain is 3-hydroxyacyl-[acyl-carrier-protein] dehydratase FabZ (161 aa).

Residue His64 is part of the active site.

It belongs to the thioester dehydratase family. FabZ subfamily.

It is found in the cytoplasm. It catalyses the reaction a (3R)-hydroxyacyl-[ACP] = a (2E)-enoyl-[ACP] + H2O. Involved in unsaturated fatty acids biosynthesis. Catalyzes the dehydration of short chain beta-hydroxyacyl-ACPs and long chain saturated and unsaturated beta-hydroxyacyl-ACPs. This Paramagnetospirillum magneticum (strain ATCC 700264 / AMB-1) (Magnetospirillum magneticum) protein is 3-hydroxyacyl-[acyl-carrier-protein] dehydratase FabZ.